Consider the following 739-residue polypeptide: Catalase-peroxidase 2 (739 aa).

A signal peptide spans 1 to 26 (MKKTTIPTLSALTLAMSLAFGGAAIA). A cross-link (tryptophyl-tyrosyl-methioninium (Trp-Tyr) (with M-253)) is located at residues 105 to 227 (WHSAGVYRIF…MGATQMGLIY (123 aa)). His-106 functions as the Proton acceptor in the catalytic mechanism. The tryptophyl-tyrosyl-methioninium (Tyr-Met) (with W-105) cross-link spans 227–253 (YVNPEGPNGVPDPLASAKEIRDTFGRM). Position 268 (His-268) interacts with heme b.

The protein belongs to the peroxidase family. Peroxidase/catalase subfamily. Homodimer or homotetramer. The cofactor is heme b. Formation of the three residue Trp-Tyr-Met cross-link is important for the catalase, but not the peroxidase activity of the enzyme.

The enzyme catalyses H2O2 + AH2 = A + 2 H2O. It carries out the reaction 2 H2O2 = O2 + 2 H2O. Its function is as follows. Bifunctional enzyme with both catalase and broad-spectrum peroxidase activity. This is Catalase-peroxidase 2 from Shewanella sp. (strain MR-4).